Reading from the N-terminus, the 132-residue chain is Large ribosomal subunit protein bL19 (132 aa).

The protein belongs to the bacterial ribosomal protein bL19 family.

This protein is located at the 30S-50S ribosomal subunit interface and may play a role in the structure and function of the aminoacyl-tRNA binding site. This is Large ribosomal subunit protein bL19 from Maricaulis maris (strain MCS10) (Caulobacter maris).